The sequence spans 340 residues: Replication factor C subunit 5 (340 aa).

M1 carries the N-acetylmethionine modification. 60 to 67 provides a ligand contact to ATP; that stretch reads GPPGTGKT.

It belongs to the activator 1 small subunits family. Subunit of the RFC complex, an heteropentameric complex consisting of a large subunit RFC1 and four small subunits RFC2, RFC3, RFC4 and RFC5; the RFC complex interacts with PCNA. Forms an heterotetrameric complex with RFC2, RFC3 and RFC4; this complex has ATPase activity but is not stimulated by PCNA. The heterotetramer of subunits RFC2, RFC3, RFC4 and RFC5 interacts with RAD17.

It localises to the nucleus. Subunit of the replication factor C (RFC) complex which acts during elongation of primed DNA templates by DNA polymerases delta and epsilon, and is necessary for ATP-dependent loading of proliferating cell nuclear antigen (PCNA) onto primed DNA. In Homo sapiens (Human), this protein is Replication factor C subunit 5 (RFC5).